Reading from the N-terminus, the 202-residue chain is Large ribosomal subunit protein uL4 (202 aa).

The tract at residues 40-71 is disordered; that stretch reads GRQGSKAQKTRSQVSGGGKKPWRQKGSGRARA. Residues 44–53 show a composition bias toward polar residues; it reads SKAQKTRSQV.

Belongs to the universal ribosomal protein uL4 family. As to quaternary structure, part of the 50S ribosomal subunit.

Functionally, one of the primary rRNA binding proteins, this protein initially binds near the 5'-end of the 23S rRNA. It is important during the early stages of 50S assembly. It makes multiple contacts with different domains of the 23S rRNA in the assembled 50S subunit and ribosome. Its function is as follows. Forms part of the polypeptide exit tunnel. This is Large ribosomal subunit protein uL4 from Hahella chejuensis (strain KCTC 2396).